Here is a 248-residue protein sequence, read N- to C-terminus: Small ribosomal subunit protein uS3 (248 aa).

Residues 38-106 enclose the KH type-2 domain; it reads IREYLEKGLD…MVALNILEVK (69 aa). Residues 214-248 form a disordered region; sequence SELNAPAQGRGRGDRNGRPRRGGQRRQRAQQKQEG. Residues 231–242 show a composition bias toward basic residues; sequence RPRRGGQRRQRA.

The protein belongs to the universal ribosomal protein uS3 family. Part of the 30S ribosomal subunit. Forms a tight complex with proteins S10 and S14.

Binds the lower part of the 30S subunit head. Binds mRNA in the 70S ribosome, positioning it for translation. This is Small ribosomal subunit protein uS3 from Corynebacterium aurimucosum (strain ATCC 700975 / DSM 44827 / CIP 107346 / CN-1) (Corynebacterium nigricans).